Consider the following 158-residue polypeptide: SPDGEYAEETGLEKEQIVVLRRAFDSFDRDKKGYISPETVSDILRMMGIKVSSTSFKQIIEEIDEDGSGQIEFSEFLQLAAKFLIEEDEEAMMKELKEAFRLYDKEGNGYITTQTLKEILHELDARLTAEELVGIIEEIDEDGSGTVDFDEFMAMMTG.

Serine 1 is subject to N-acetylserine. 4 consecutive EF-hand domains span residues glutamate 15 to lysine 50, valine 51 to glutamate 86, alanine 91 to arginine 126, and leucine 127 to glycine 158. Positions 64, 66, 68, 70, and 75 each coordinate Ca(2+). Ca(2+) is bound by residues aspartate 140, aspartate 142, serine 144, threonine 146, and glutamate 151.

Belongs to the troponin C family.

Troponin is the central regulatory protein of striated muscle contraction. Tn consists of three components: Tn-I which is the inhibitor of actomyosin ATPase, Tn-T which contains the binding site for tropomyosin and Tn-C. The binding of calcium to Tn-C abolishes the inhibitory action of Tn on actin filaments. The sequence is that of Troponin C, isoform 1 from Balanus nubilus (Giant acorn barnacle).